The primary structure comprises 305 residues: MSSLVRPINLGKINHSQSTVKDYILLMKPRVISLVIFTGFVGMWLAPYSVHPFIAGIAVVCIALGAGSAGAINMWYDRDIDSLMKRTQKRPIVRGVIESDEALSFGLITGFFAVFFMALCVNLLASFLLLFTIFYYICIYTIWLKRRSIQNIVIGGVSGALPPVIGYAAVSNTISLESIILFLIIFIWTPPHSWALALFCNDDYKNCKVPMMPAVKGTLYTKKQILIYSILLFIVSLMPFFIGMNNFIYLIIAGILGVVFLYYAGSLFYDTSDNKQAKRFFAYSIFYLFFIFLLLYSTNTISTIS.

The next 9 helical transmembrane spans lie at 31 to 51 (VISL…YSVH), 52 to 72 (PFIA…AGAI), 96 to 118 (VIES…FFMA), 123 to 145 (LLAS…IWLK), 151 to 171 (NIVI…AAVS), 179 to 199 (IILF…LALF), 225 to 245 (ILIY…IGMN), 247 to 267 (FIYL…AGSL), and 281 to 301 (FAYS…TNTI).

Belongs to the UbiA prenyltransferase family. Protoheme IX farnesyltransferase subfamily.

It is found in the cell inner membrane. The enzyme catalyses heme b + (2E,6E)-farnesyl diphosphate + H2O = Fe(II)-heme o + diphosphate. The protein operates within porphyrin-containing compound metabolism; heme O biosynthesis; heme O from protoheme: step 1/1. Converts heme B (protoheme IX) to heme O by substitution of the vinyl group on carbon 2 of heme B porphyrin ring with a hydroxyethyl farnesyl side group. The chain is Protoheme IX farnesyltransferase from Rickettsia massiliae (strain Mtu5).